A 129-amino-acid polypeptide reads, in one-letter code: uncharacterized protein (129 aa).

The HIT domain maps to I3–V109. A Histidine triad motif motif is present at residues H94–H98.

This is an uncharacterized protein from Methanocaldococcus jannaschii (strain ATCC 43067 / DSM 2661 / JAL-1 / JCM 10045 / NBRC 100440) (Methanococcus jannaschii).